A 419-amino-acid polypeptide reads, in one-letter code: Dynein regulatory complex protein 9 (419 aa).

Disordered regions lie at residues 25 to 45 (TGEP…EETS) and 394 to 419 (NFKM…RRKK). Acidic residues predominate over residues 30 to 45 (EAAEEDLDYEEEEETS). The 30-residue stretch at 372 to 401 (ELRSIVKLQAWWRGSVVRKEIGNFKMPKKD) folds into the IQ domain. The segment covering 394-413 (NFKMPKKDKDDSKDSKGKEK) has biased composition (basic and acidic residues).

The protein belongs to the DRC9 family. In terms of assembly, component of the nexin-dynein regulatory complex (N-DRC). Interacts (via IQ domain) with CALM when calcium levels are low. Does not interact with CALM in the presence of Ca(2+). Interacts with the HSP70 proteins HSPA1L and HSPA8. May form a complex with CAMK4 and HSP70. In terms of tissue distribution, expressed in the testes (at protein level). Also detected in oviduct (at protein level). Also detected in the trachea.

It localises to the cytoplasm. The protein resides in the cell projection. The protein localises to the cilium. It is found in the flagellum. Its subcellular location is the cytoskeleton. It localises to the flagellum axoneme. In terms of biological role, component of the nexin-dynein regulatory complex (N-DRC), a key regulator of ciliary/flagellar motility which maintains the alignment and integrity of the distal axoneme and regulates microtubule sliding in motile axonemes. Binds calmodulin when cellular Ca(2+) levels are low and thereby contributes to the regulation of calcium and calmodulin-dependent protein kinase IV (CAMK4) activity; contributes to the regulation of CAMK4 signaling cascades. Required for normal axoneme assembly in sperm flagella, normal sperm tail formation and for male fertility. In Mus musculus (Mouse), this protein is Dynein regulatory complex protein 9 (Iqcg).